The following is a 557-amino-acid chain: Hepatocyte nuclear factor 1-beta (557 aa).

The dimerization stretch occupies residues 1–31 (MVSKLTSLQQELLSALLSSGVTKEVLVQALE). The HNF-p1 domain occupies 1–32 (MVSKLTSLQQELLSALLSSGVTKEVLVQALEE). Residues S49, S52, S75, and S80 each carry the phosphoserine modification. Residues 64–85 (TLTNGHAKGRLSGDEGSEDGDD) form a disordered region. In terms of domain architecture, POU-specific atypical spans 93–188 (KELQALNTEE…ILRQFNQTVQ (96 aa)). A DNA-binding region (homeobox; HNF1-type) is located at residues 231–311 (MRRNRFKWGP…NRRKEEAFRQ (81 aa)). The segment at 324 to 352 (HSLNPLLSHGSPHHQPSSSPPNKLSGVRY) is disordered. The span at 328–344 (PLLSHGSPHHQPSSSPP) shows a compositional bias: low complexity.

It belongs to the HNF1 homeobox family. In terms of assembly, binds DNA as a dimer. Can form homodimer or heterodimer with HNF1-alpha. Interacts (via HNF-p1 domain) with PCBD1; the interaction increases its transactivation activity.

It is found in the nucleus. Functionally, transcription factor that binds to the inverted palindrome 5'-GTTAATNATTAAC-3'. Binds to the FPC element in the cAMP regulatory unit of the PLAU gene. Transcriptional activity is increased by coactivator PCBD1. The protein is Hepatocyte nuclear factor 1-beta (HNF1B) of Homo sapiens (Human).